A 132-amino-acid polypeptide reads, in one-letter code: uncharacterized protein (132 aa).

Residues 1–68 (MCSAGELLRG…HTGEPVGDDY (68 aa)) form a disordered region. Residues 100-120 (VIVIFFWVMLWFLGLQALGLV) traverse the membrane as a helical segment.

The protein belongs to the FAM241 family.

The protein localises to the membrane. This is an uncharacterized protein from Homo sapiens (Human).